A 712-amino-acid polypeptide reads, in one-letter code: TGF-beta-activated kinase 1 and MAP3K7-binding protein 3 (712 aa).

Position 2 is an N-acetylalanine (Ala-2). The CUE domain maps to 8–51 (LDIQVLHDLRQRFPEIPEGVVSQCMLQNNNNLEACCRALSQESS). 3 positions are modified to phosphoserine: Ser-60, Ser-101, and Ser-103. Disordered regions lie at residues 141-189 (FMNE…HIPR), 227-345 (PGSI…KQGS), 369-447 (TVEP…SPRV), and 475-509 (ERSA…SSGS). Residues 163 to 173 (MQTGMNPSAMQ) show a composition bias toward polar residues. Composition is skewed to low complexity over residues 233–249 (RQTS…QSTP) and 269–290 (YPHQ…IPQS). Over residues 322 to 332 (PPSPSTTPPHP) the composition is skewed to pro residues. 2 stretches are compositionally biased toward polar residues: residues 336–345 (GPPSYQKQGS) and 371–404 (EPSQ…TATT). Ser-385 bears the Phosphoserine mark. A Phosphothreonine modification is found at Thr-404. Residues 405-417 (PPSSSPSRGISSQ) show a composition bias toward low complexity. Ser-409 and Ser-492 each carry phosphoserine. A Phosphoserine; by MAPKAPK2 and MAPKAPK3 modification is found at Ser-506. The stretch at 517-559 (ALLLHQRARMERLAKQLKLEKEELERLKSEVNGMEHDLMQRRL) forms a coiled coil. The segment at 609–636 (MNNFYDNIEPGPVVPPKPSKKDSSDPCT) is disordered. Residues 627–636 (SKKDSSDPCT) are compositionally biased toward basic and acidic residues. A Glycyl lysine isopeptide (Lys-Gly) (interchain with G-Cter in ubiquitin) cross-link involves residue Lys-649. Residues 658–667 (QAAAADEHRT) show a composition bias toward basic and acidic residues. The interval 658–682 (QAAAADEHRTGSTQSPRTQPRDEDY) is disordered. Residues 682 to 712 (YEGAPWNCDSCTFLNHPALNRCEQCEMPRYT) form a RanBP2-type zinc finger. Cys-692 bears the (Microbial infection) S-methylcysteine mark.

In terms of assembly, interacts with TAB1, TAB2, MAP3K7, TRAF2 and TRAF6. The minimal TAB3-containing complex (TAB1-MAP3K7-TAB3) appears not to contain TAB2. However, it seems sensible to consider that TAB2 may also join this complex and may act in a cooperative manner with TAB3. Interacts with DYNC2I2 (via the WD domains). Interacts with RBCK1. Binds 'Lys-63'-linked polyubiquitin chains. Interacts with TRIM5. Interacts with TRIM38 (via B30.2/SPRY domain), leading to its translocation to lysosomes and degradation. Interacts with ASB1. As to quaternary structure, (Microbial infection) Interacts with M.tuberculosis PtpA, which blocks the NF-kappa-B signaling pathway. Ubiquitinated; following IL1 stimulation or TRAF6 overexpression. Ubiquitinated by AMFR via 'Lys-27'-linked polyubiquitination; leading to TAK1/MAP3K7 activation. Post-translationally, degraded in a lysosome-dependent manner following interaction with TRIM38. In terms of processing, phosphorylated at Ser-506 by MAPKAPK2 and MAPKAPK3 following IL1 treatment. (Microbial infection) Methylated at Cys-692 by enteropathogenic E.coli protein NleE or S.flexneri protein OspZ: methylation disrupts zinc-binding and ability to bind 'Lys-63'-linked ubiquitin, leading to NF-kappa-B inactivation. Widely expressed. Constitutively overexpressed in certain tumor tissues. As to expression, major transcript. In terms of tissue distribution, minor transcript.

Its function is as follows. Adapter required to activate the JNK and NF-kappa-B signaling pathways through the specific recognition of 'Lys-63'-linked polyubiquitin chains by its RanBP2-type zinc finger (NZF). Acts as an adapter linking MAP3K7/TAK1 and TRAF6 to 'Lys-63'-linked polyubiquitin chains. The RanBP2-type zinc finger (NZF) specifically recognizes Lys-63'-linked polyubiquitin chains unanchored or anchored to the substrate proteins such as RIPK1/RIP1 and RIPK2: this acts as a scaffold to organize a large signaling complex to promote autophosphorylation of MAP3K7/TAK1, and subsequent activation of I-kappa-B-kinase (IKK) core complex by MAP3K7/TAK1. Functionally, may be an oncogenic factor. This chain is TGF-beta-activated kinase 1 and MAP3K7-binding protein 3, found in Homo sapiens (Human).